The chain runs to 356 residues: Probable dual-specificity RNA methyltransferase RlmN (356 aa).

The Proton acceptor role is filled by Glu-92. Residues 98 to 336 (HKYGFSVCVT…CGVRLEHGTD (239 aa)) enclose the Radical SAM core domain. Cys-105 and Cys-341 are oxidised to a cystine. [4Fe-4S] cluster is bound by residues Cys-112, Cys-116, and Cys-119. S-adenosyl-L-methionine is bound by residues 164-165 (GE), Ser-196, 219-221 (SLH), and Asn-297. The active-site S-methylcysteine intermediate is Cys-341.

The protein belongs to the radical SAM superfamily. RlmN family. [4Fe-4S] cluster is required as a cofactor.

It localises to the cytoplasm. It carries out the reaction adenosine(2503) in 23S rRNA + 2 reduced [2Fe-2S]-[ferredoxin] + 2 S-adenosyl-L-methionine = 2-methyladenosine(2503) in 23S rRNA + 5'-deoxyadenosine + L-methionine + 2 oxidized [2Fe-2S]-[ferredoxin] + S-adenosyl-L-homocysteine. The catalysed reaction is adenosine(37) in tRNA + 2 reduced [2Fe-2S]-[ferredoxin] + 2 S-adenosyl-L-methionine = 2-methyladenosine(37) in tRNA + 5'-deoxyadenosine + L-methionine + 2 oxidized [2Fe-2S]-[ferredoxin] + S-adenosyl-L-homocysteine. Functionally, specifically methylates position 2 of adenine 2503 in 23S rRNA and position 2 of adenine 37 in tRNAs. The protein is Probable dual-specificity RNA methyltransferase RlmN of Shouchella clausii (strain KSM-K16) (Alkalihalobacillus clausii).